A 271-amino-acid polypeptide reads, in one-letter code: Formamidopyrimidine-DNA glycosylase (271 aa).

P2 serves as the catalytic Schiff-base intermediate with DNA. E3 acts as the Proton donor in catalysis. K57 (proton donor; for beta-elimination activity) is an active-site residue. H90, R109, and K151 together coordinate DNA. The segment at 236–270 adopts an FPG-type zinc-finger fold; it reads HVYSRGGETCTSCGNLLSEIRLGQRTTVFCGICQT. The Proton donor; for delta-elimination activity role is filled by R260.

This sequence belongs to the FPG family. In terms of assembly, monomer. Zn(2+) serves as cofactor.

It catalyses the reaction Hydrolysis of DNA containing ring-opened 7-methylguanine residues, releasing 2,6-diamino-4-hydroxy-5-(N-methyl)formamidopyrimidine.. It carries out the reaction 2'-deoxyribonucleotide-(2'-deoxyribose 5'-phosphate)-2'-deoxyribonucleotide-DNA = a 3'-end 2'-deoxyribonucleotide-(2,3-dehydro-2,3-deoxyribose 5'-phosphate)-DNA + a 5'-end 5'-phospho-2'-deoxyribonucleoside-DNA + H(+). Its function is as follows. Involved in base excision repair of DNA damaged by oxidation or by mutagenic agents. Acts as a DNA glycosylase that recognizes and removes damaged bases. Has a preference for oxidized purines, such as 7,8-dihydro-8-oxoguanine (8-oxoG). Has AP (apurinic/apyrimidinic) lyase activity and introduces nicks in the DNA strand. Cleaves the DNA backbone by beta-delta elimination to generate a single-strand break at the site of the removed base with both 3'- and 5'-phosphates. The protein is Formamidopyrimidine-DNA glycosylase of Shewanella baltica (strain OS195).